Here is a 243-residue protein sequence, read N- to C-terminus: Small ribosomal subunit protein mS23 (243 aa).

This sequence belongs to the mitochondrion-specific ribosomal protein mS23 family. As to quaternary structure, component of the mitochondrial small ribosomal subunit.

The protein localises to the mitochondrion. This chain is Small ribosomal subunit protein mS23 (rsm25), found in Emericella nidulans (strain FGSC A4 / ATCC 38163 / CBS 112.46 / NRRL 194 / M139) (Aspergillus nidulans).